A 344-amino-acid chain; its full sequence is Ureide permease 3 (344 aa).

Residues 1–10 (MYVIESKGGT) lie on the Extracellular side of the membrane. Residues 11 to 31 (ITCMLLALLFLGTWPAIMTLT) form a helical membrane-spanning segment. Residues 32–42 (ERRGRLPQHTY) lie on the Cytoplasmic side of the membrane. The chain crosses the membrane as a helical span at residues 43–63 (LDYTLTNLLAAVIIAFTLGEI). Over 64–78 (SPSRPNFTTQLSQDN) the chain is Extracellular. A helical membrane pass occupies residues 79 to 99 (WPSVMFAMAGGIFLSLGTLAT). Topologically, residues 100 to 101 (QY) are cytoplasmic. Residues 102-122 (AWAFVGLSVTEVITASIAVVI) form a helical membrane-spanning segment. At 123 to 136 (GTTLNYFLDDRINR) the chain is on the extracellular side. The chain crosses the membrane as a helical span at residues 137–157 (AEVLFPGVACFLIAVCFGSAV). Topologically, residues 158–208 (HKSNAADNKSKLQGFKSLETTSSFQMETSSIKEGKAKVGTADFLIEVEKQR) are cytoplasmic. Residue 209–216 (AIKVFGKS) coordinates ATP. A helical transmembrane segment spans residues 209–229 (AIKVFGKSTIIGLAITFFAVP). The Extracellular portion of the chain corresponds to 230–235 (KLNVYT). A helical transmembrane segment spans residues 236-256 (AFFYFSISSFGVGLILNIIFL). At 257–278 (YWPILGLPRSSFKAYLNDWNGR) the chain is on the cytoplasmic side. The helical transmembrane segment at 279–299 (GWSFLAGFLCGFGNGLQFMGG) threads the bilayer. Over 300 to 344 (QAAGYAAAGAVQIENKHFGGYCCLENTKDHQEKHIHFLSVCYLCS) the chain is Extracellular.

Belongs to the plant ureide permease (TC 2.A.7.19) family.

The protein localises to the membrane. Functionally, proton-coupled transporter that transports a wide spectrum of oxo derivatives of heterocyclic nitrogen compounds. This Arabidopsis thaliana (Mouse-ear cress) protein is Ureide permease 3.